Consider the following 238-residue polypeptide: Transcription factor MYB27 (238 aa).

2 HTH myb-type domains span residues 6–58 (EETL…MNYL) and 59–113 (NPTL…RKKQ). A Nuclear localization signal motif is present at residues 31–38 (ERRWDSLA). 2 consecutive DNA-binding regions (H-T-H motif) follow at residues 34-58 (WDSLAIVSGLKRSGKSCRLRWMNYL) and 86-109 (WSKIARRLPGRTDNEIKNYWRTHY).

It localises to the nucleus. The protein is Transcription factor MYB27 of Arabidopsis thaliana (Mouse-ear cress).